We begin with the raw amino-acid sequence, 144 residues long: Ig heavy chain V region MOPC 141 (144 aa).

Residues 1-19 form the signal peptide; it reads MAVLALLFCLATFPSCILS. In terms of domain architecture, Ig-like spans 20 to 130; it reads QVQLKESGPG…YYGRSDKYFT (111 aa).

The polypeptide is Ig heavy chain V region MOPC 141 (Mus musculus (Mouse)).